Here is a 481-residue protein sequence, read N- to C-terminus: Cytochrome P450 monooxygenase dpfgJ (481 aa).

A helical membrane pass occupies residues 23–43 (LVFTQAAVIGSILFVFLLGLY). Residue N338 is glycosylated (N-linked (GlcNAc...) asparagine). Residue C427 coordinates heme.

This sequence belongs to the cytochrome P450 family. The cofactor is heme.

It is found in the membrane. It functions in the pathway secondary metabolite biosynthesis; terpenoid biosynthesis. In terms of biological role, cytochrome P450 monooxygenase; part of the gene cluster that mediates the biosynthesis of diterpenoid pyrones. The first step of the pathway is the synthesis of the alpha-pyrone moiety by the polyketide synthase dpfgA via condensation of one acetyl-CoA starter unit with 3 malonyl-CoA units and 2 methylations. The alpha-pyrone is then combined with geranylgeranyl pyrophosphate (GGPP) formed by the GGPP synthase dpfgD through the action of the prenyltransferase dpfgC to yield a linear alpha-pyrone diterpenoid. Subsequent steps in the diterpenoid pyrone biosynthetic pathway involve the decalin core formation, which is initiated by the epoxidation of the C10-C11 olefin by the FAD-dependent oxidoreductase dpfgE, and is followed by a cyclization cascade catalyzed by the terpene cyclase dpfgB. The short chain dehydrogenase/reductase dpfgG then oxidizes the 8S hydroxy group to a ketone and the short chain dehydrogenase/reductase dpfgH reduces the ketone to the 8R hydroxy group to yield higginsianin B. Higginsianin B is further methylated by the methyltransferase dpfgI to produce the intermediate named FDDP B. The cytochrome P450 monooxygenase dfgpJ then catalyzes a three-step oxidation at C-27 to generate a carboxylic acid as well as C-26 hydroxylation. Finally, methyltransferase dpfgK methylates the carboxylic acid generated by dpfgJ, yielding the final diterpenoid pyrones from the pathway which were named FDDP D and FDDP E. In Gibberella zeae (strain ATCC MYA-4620 / CBS 123657 / FGSC 9075 / NRRL 31084 / PH-1) (Wheat head blight fungus), this protein is Cytochrome P450 monooxygenase dpfgJ.